Reading from the N-terminus, the 305-residue chain is Serine/threonine-protein kinase 16 (305 aa).

A lipid anchor (N-myristoyl glycine) is attached at glycine 2. S-palmitoyl cysteine attachment occurs at residues cysteine 6 and cysteine 8. Positions 20–293 (YLFVQKLGEG…PVLLSQLEAL (274 aa)) constitute a Protein kinase domain. Residues 26–34 (LGEGGFSYV) and lysine 49 contribute to the ATP site. Aspartate 148 acts as the Proton acceptor in catalysis. The activation loop stretch occupies residues 166–202 (DLGSMNQACIQVEGSRQALALQDWAAQRCTISYRAPE). At serine 197 the chain carries Phosphoserine; by autocatalysis. Tyrosine 198 is subject to Phosphotyrosine; by autocatalysis.

The protein belongs to the protein kinase superfamily. Ser/Thr protein kinase family. As to quaternary structure, monomer. Interacts with DRG1 (via its N-terminal); the interaction phosphorylates DRG1. In terms of processing, mainly autophosphorylated on serine/threonine residues. Also autophosphorylated on Tyr-198. Ubiquitously expressed at low levels. Relatively higher levels in testis, kidney and liver.

The protein resides in the cytoplasm. Its subcellular location is the perinuclear region. It localises to the membrane. It catalyses the reaction L-seryl-[protein] + ATP = O-phospho-L-seryl-[protein] + ADP + H(+). The enzyme catalyses L-threonyl-[protein] + ATP = O-phospho-L-threonyl-[protein] + ADP + H(+). The catalysed reaction is L-tyrosyl-[protein] + ATP = O-phospho-L-tyrosyl-[protein] + ADP + H(+). Functionally, membrane-associated protein kinase that phosphorylates on serine and threonine residues. In vitro substrates include DRG1, ENO1 and EIF4EBP1. Also autophosphorylates. May be involved in secretory vesicle trafficking or intracellular signaling. May have a role in regulating stromal-epithelial interactions that occur during ductal morphogenesis in the mammary gland. May be involved in TGF-beta signaling. Able to autophosphorylate on Tyr residue; it is however unclear whether it has tyrosine-protein kinase toward other proteins. In Mus musculus (Mouse), this protein is Serine/threonine-protein kinase 16 (Stk16).